The primary structure comprises 246 residues: Uridylate kinase (246 aa).

11–14 is a binding site for ATP; that stretch reads KISG. Gly-53 lines the UMP pocket. ATP contacts are provided by Gly-54 and Arg-58. UMP-binding positions include Asp-74 and 135-142; that span reads TGSPYLTT. Residues Thr-162, Tyr-169, and Asp-172 each contribute to the ATP site.

Belongs to the UMP kinase family. As to quaternary structure, homohexamer.

It localises to the cytoplasm. It carries out the reaction UMP + ATP = UDP + ADP. It functions in the pathway pyrimidine metabolism; CTP biosynthesis via de novo pathway; UDP from UMP (UMPK route): step 1/1. With respect to regulation, inhibited by UTP. Functionally, catalyzes the reversible phosphorylation of UMP to UDP. This Chlamydia abortus (strain DSM 27085 / S26/3) (Chlamydophila abortus) protein is Uridylate kinase.